A 520-amino-acid chain; its full sequence is Hydroxymethylglutaryl-CoA synthase, cytoplasmic (520 aa).

Ser4 carries the phosphoserine modification. Position 44 (Ala44) interacts with (3S)-3-hydroxy-3-methylglutaryl-CoA. 44–46 (AGK) contributes to the CoA binding site. Lys46 bears the N6-acetyllysine mark. Catalysis depends on Glu95, which acts as the Proton donor/acceptor. The (3S)-3-hydroxy-3-methylglutaryl-CoA site is built by Cys129, Asn167, Thr171, Ser221, and His264. Cys129 acts as the Acyl-thioester intermediate in catalysis. Residue Asn167 participates in CoA binding. Residue Ser221 participates in CoA binding. The active-site Proton donor/acceptor is His264. Positions 269 and 273 each coordinate CoA. Residues Lys273, Asn343, and Ser377 each contribute to the (3S)-3-hydroxy-3-methylglutaryl-CoA site. N6-acetyllysine is present on Lys273. Thr476 carries the phosphothreonine modification. A disordered region spans residues 492 to 520 (HIPSPAKKVPRLPATAAEPEAAVISNGEH). Residues Ser495 and Ser516 each carry the phosphoserine modification.

The protein belongs to the thiolase-like superfamily. HMG-CoA synthase family. Homodimer.

The protein resides in the cytoplasm. The catalysed reaction is acetoacetyl-CoA + acetyl-CoA + H2O = (3S)-3-hydroxy-3-methylglutaryl-CoA + CoA + H(+). Its pathway is metabolic intermediate biosynthesis; (R)-mevalonate biosynthesis; (R)-mevalonate from acetyl-CoA: step 2/3. Catalyzes the condensation of acetyl-CoA with acetoacetyl-CoA to form HMG-CoA, which is converted by HMG-CoA reductase (HMGCR) into mevalonate, a precursor for cholesterol synthesis. This chain is Hydroxymethylglutaryl-CoA synthase, cytoplasmic, found in Pongo abelii (Sumatran orangutan).